The sequence spans 113 residues: Large ribosomal subunit protein uL22 (113 aa).

This sequence belongs to the universal ribosomal protein uL22 family. As to quaternary structure, part of the 50S ribosomal subunit.

In terms of biological role, this protein binds specifically to 23S rRNA; its binding is stimulated by other ribosomal proteins, e.g. L4, L17, and L20. It is important during the early stages of 50S assembly. It makes multiple contacts with different domains of the 23S rRNA in the assembled 50S subunit and ribosome. The globular domain of the protein is located near the polypeptide exit tunnel on the outside of the subunit, while an extended beta-hairpin is found that lines the wall of the exit tunnel in the center of the 70S ribosome. The sequence is that of Large ribosomal subunit protein uL22 from Bacillus cytotoxicus (strain DSM 22905 / CIP 110041 / 391-98 / NVH 391-98).